The following is a 453-amino-acid chain: DNA repair protein RadA (453 aa).

Residues 10–27 (CTECGATFPKWAGQCADC) form a C4-type zinc finger. ATP is bound at residue 96–103 (GDPGIGKS). The RadA KNRFG motif motif lies at 252 to 256 (KNRFG). Positions 351–453 (DVFLNVVGGV…LEQALDALFE (103 aa)) are lon-protease-like.

Belongs to the RecA family. RadA subfamily.

Its function is as follows. DNA-dependent ATPase involved in processing of recombination intermediates, plays a role in repairing DNA breaks. Stimulates the branch migration of RecA-mediated strand transfer reactions, allowing the 3' invading strand to extend heteroduplex DNA faster. Binds ssDNA in the presence of ADP but not other nucleotides, has ATPase activity that is stimulated by ssDNA and various branched DNA structures, but inhibited by SSB. Does not have RecA's homology-searching function. The protein is DNA repair protein RadA of Pseudomonas aeruginosa (strain ATCC 15692 / DSM 22644 / CIP 104116 / JCM 14847 / LMG 12228 / 1C / PRS 101 / PAO1).